Reading from the N-terminus, the 512-residue chain is D-alanine--D-alanyl carrier protein ligase (512 aa).

152 to 153 (TS) lines the ATP pocket. Asp-199 serves as a coordination point for D-alanine. Residue 294–299 (NAYGPT) coordinates ATP. Val-303 provides a ligand contact to D-alanine. ATP contacts are provided by residues Asp-385, 397–400 (YGGR), and Lys-499. Residue Lys-499 participates in D-alanine binding.

The protein belongs to the ATP-dependent AMP-binding enzyme family. DltA subfamily.

The protein resides in the cytoplasm. The enzyme catalyses holo-[D-alanyl-carrier protein] + D-alanine + ATP = D-alanyl-[D-alanyl-carrier protein] + AMP + diphosphate. It participates in cell wall biogenesis; lipoteichoic acid biosynthesis. Catalyzes the first step in the D-alanylation of lipoteichoic acid (LTA), the activation of D-alanine and its transfer onto the D-alanyl carrier protein (Dcp) DltC. In an ATP-dependent two-step reaction, forms a high energy D-alanyl-AMP intermediate, followed by transfer of the D-alanyl residue as a thiol ester to the phosphopantheinyl prosthetic group of the Dcp. D-alanylation of LTA plays an important role in modulating the properties of the cell wall in Gram-positive bacteria, influencing the net charge of the cell wall. The chain is D-alanine--D-alanyl carrier protein ligase from Streptococcus pyogenes serotype M1.